The chain runs to 183 residues: ATP synthase subunit delta (183 aa).

It belongs to the ATPase delta chain family. F-type ATPases have 2 components, F(1) - the catalytic core - and F(0) - the membrane proton channel. F(1) has five subunits: alpha(3), beta(3), gamma(1), delta(1), epsilon(1). F(0) has three main subunits: a(1), b(2) and c(10-14). The alpha and beta chains form an alternating ring which encloses part of the gamma chain. F(1) is attached to F(0) by a central stalk formed by the gamma and epsilon chains, while a peripheral stalk is formed by the delta and b chains.

It is found in the cell inner membrane. F(1)F(0) ATP synthase produces ATP from ADP in the presence of a proton or sodium gradient. F-type ATPases consist of two structural domains, F(1) containing the extramembraneous catalytic core and F(0) containing the membrane proton channel, linked together by a central stalk and a peripheral stalk. During catalysis, ATP synthesis in the catalytic domain of F(1) is coupled via a rotary mechanism of the central stalk subunits to proton translocation. In terms of biological role, this protein is part of the stalk that links CF(0) to CF(1). It either transmits conformational changes from CF(0) to CF(1) or is implicated in proton conduction. This is ATP synthase subunit delta from Vesicomyosocius okutanii subsp. Calyptogena okutanii (strain HA).